Reading from the N-terminus, the 63-residue chain is Large ribosomal subunit protein uL29 (63 aa).

It belongs to the universal ribosomal protein uL29 family.

The polypeptide is Large ribosomal subunit protein uL29 (Actinobacillus succinogenes (strain ATCC 55618 / DSM 22257 / CCUG 43843 / 130Z)).